The primary structure comprises 283 residues: Aldo-keto reductase Mmcs_1938 (283 aa).

Catalysis depends on tyrosine 58, which acts as the Proton donor. The NADPH site is built by glycine 196, leucine 198, valine 200, isoleucine 236, arginine 238, serine 239, alanine 240, arginine 244, serine 247, asparagine 248, and arginine 274.

It belongs to the aldo/keto reductase family.

In Mycobacterium sp. (strain MCS), this protein is Aldo-keto reductase Mmcs_1938.